Reading from the N-terminus, the 227-residue chain is 2-C-methyl-D-erythritol 4-phosphate cytidylyltransferase (227 aa).

This sequence belongs to the IspD/TarI cytidylyltransferase family. IspD subfamily.

The enzyme catalyses 2-C-methyl-D-erythritol 4-phosphate + CTP + H(+) = 4-CDP-2-C-methyl-D-erythritol + diphosphate. The protein operates within isoprenoid biosynthesis; isopentenyl diphosphate biosynthesis via DXP pathway; isopentenyl diphosphate from 1-deoxy-D-xylulose 5-phosphate: step 2/6. Its function is as follows. Catalyzes the formation of 4-diphosphocytidyl-2-C-methyl-D-erythritol from CTP and 2-C-methyl-D-erythritol 4-phosphate (MEP). The protein is 2-C-methyl-D-erythritol 4-phosphate cytidylyltransferase of Bordetella bronchiseptica (strain ATCC BAA-588 / NCTC 13252 / RB50) (Alcaligenes bronchisepticus).